We begin with the raw amino-acid sequence, 845 residues long: Cadherin-related family member 5 (845 aa).

Positions 1–25 (MGSWALLWPPLLFTGLLVRPPGTMA) are cleaved as a signal peptide. The Extracellular portion of the chain corresponds to 26–669 (QAQYCSVNKD…DKRFSVVDMA (644 aa)). N-linked (GlcNAc...) asparagine glycosylation is found at Asn44, Asn81, Asn140, Asn198, Asn297, Asn308, and Asn405. Cadherin domains follow at residues 71 to 124 (FRIQ…APEF), 125 to 237 (PFKT…PPWF), 249 to 354 (IQAQ…PPRF), and 355 to 459 (PQRL…PPST). The tract at residues 452 to 661 (SEQEPPSTDV…SSGGGPSEDK (210 aa)) is disordered. Residues 506 to 518 (SGTTLRPPTSSTP) are compositionally biased toward low complexity. Asn526 carries N-linked (GlcNAc...) asparagine glycosylation. Composition is skewed to polar residues over residues 539-549 (TAQTPKPGTSQ), 556-594 (GTSTSHQPATPSGGTAQTPEPGTSQPMPPSMGTSTSHQP), and 602-611 (AQTPEAGTSQ). 3 tandem repeats follow at residues 540-570 (AQTPKPGTSQPMPPGVGTSTSHQPATPSGGT), 571-601 (AQTPEPGTSQPMPPSMGTSTSHQPATPGGGT), and 602-631 (AQTPEAGTSQPMPPGMGTSTSHQPTTPGGG). The 4 X 31 AA approximate tandem repeats stretch occupies residues 540–645 (AQTPKPGTSQ…PEPGTSQPMP (106 aa)). The 4; truncated repeat unit spans residues 632–645 (TAQTPEPGTSQPMP). A compositionally biased stretch (low complexity) spans 633–652 (AQTPEPGTSQPMPLSKSTPS). Residues 670-690 (ALGGVLGALLLLALLGLAVLV) form a helical membrane-spanning segment. The Cytoplasmic segment spans residues 691–845 (HKHYGPRLKC…DAPGGDDSYI (155 aa)). Residues 691 to 845 (HKHYGPRLKC…DAPGGDDSYI (155 aa)) form a mediates interaction with USH1C and MYO7B and is required for proper localization to microvilli tips and function in microvilli organization region. The tract at residues 724-789 (ANWAPVPSPT…KERRPEGGYK (66 aa)) is disordered. Over residues 729-762 (VPSPTHDPKPAEAPMPAEPAPPGPASPGGAPEPP) the composition is skewed to pro residues. Residue Ser770 is modified to Phosphoserine. Thr810 is modified (phosphothreonine). The segment at 811–845 (LDVDGASDSGSGDEGEGAGRGGGPYDAPGGDDSYI) is disordered. Ser817, Ser819, and Ser821 each carry phosphoserine. Positions 835–845 (YDAPGGDDSYI) are enriched in low complexity.

As to quaternary structure, part of the IMAC/intermicrovillar adhesion complex/intermicrovillar tip-link complex composed of ANKS4B, MYO7B, USH1C, CDHR2 and CDHR5. Interacts (via cytoplasmic domain) with USH1C and MYO7B; required for proper localization of CDHR5 to microvilli tips and its function in brush border differentiation. In terms of processing, N- and O-glycosylated. Highest expression in kidney, liver, colon and small intestine. In kidney, expressed apically along brush border of proximal convoluted tubule but not in cortical collecting ducts. Isoform 1 is expressed primarily in adult small intestine and colon. Isoform 2 is highly expressed in fetal liver. Expressed in duodenum with higher expression in enterocytes along the villus axis and lower expression in crypts (at protein level).

The protein localises to the apical cell membrane. It localises to the cell projection. It is found in the microvillus membrane. In terms of biological role, intermicrovillar adhesion molecule that forms, via its extracellular domain, calcium-dependent heterophilic complexes with CDHR2 on adjacent microvilli. Thereby, controls the packing of microvilli at the apical membrane of epithelial cells. Through its cytoplasmic domain, interacts with microvillus cytoplasmic proteins to form the intermicrovillar adhesion complex/IMAC. This complex plays a central role in microvilli and epithelial brush border differentiation. This chain is Cadherin-related family member 5, found in Homo sapiens (Human).